The sequence spans 314 residues: Olfactory receptor 10A6 (314 aa).

The Extracellular portion of the chain corresponds to M1–G25. The N-linked (GlcNAc...) asparagine glycan is linked to N5. Residues Q26–I46 form a helical membrane-spanning segment. At V47–S54 the chain is on the cytoplasmic side. Residues L55–A75 form a helical membrane-spanning segment. Over V76–A99 the chain is Extracellular. A disulfide bond links C97 and C189. A helical transmembrane segment spans residues Q100–Y120. The Cytoplasmic portion of the chain corresponds to D121–G139. The helical transmembrane segment at V140–T160 threads the bilayer. Residues S161–I197 lie on the Extracellular side of the membrane. Residues Y198–S217 form a helical membrane-spanning segment. The Cytoplasmic segment spans residues Y218–A237. The helical transmembrane segment at F238 to T258 threads the bilayer. Residues Y259–K271 lie on the Extracellular side of the membrane. The helical transmembrane segment at K272–L292 threads the bilayer. Over R293–I314 the chain is Cytoplasmic.

Belongs to the G-protein coupled receptor 1 family.

It is found in the cell membrane. Odorant receptor. The chain is Olfactory receptor 10A6 (OR10A6) from Homo sapiens (Human).